A 524-amino-acid chain; its full sequence is Glucose-6-phosphate 1-dehydrogenase (524 aa).

At Ser-20 the chain carries Phosphoserine. Residues Gly-42 to Lys-49, Arg-76, and Lys-175 contribute to the NADP(+) site. Residues Lys-175, His-205–Lys-209, Glu-243, and Asp-262 contribute to the D-glucose 6-phosphate site. Catalysis depends on His-267, which acts as the Proton acceptor. Residue Arg-362 coordinates NADP(+). The D-glucose 6-phosphate site is built by Lys-365 and Arg-370. Residues Lys-371, Arg-375, and Arg-398 each contribute to the NADP(+) site. Residue Gln-400 participates in D-glucose 6-phosphate binding. NADP(+) contacts are provided by residues Tyr-406–Lys-408, Asp-426–Thr-428, Arg-492, Tyr-508, and Trp-514.

This sequence belongs to the glucose-6-phosphate dehydrogenase family.

Its subcellular location is the cytoplasm. It localises to the cytosol. It carries out the reaction D-glucose 6-phosphate + NADP(+) = 6-phospho-D-glucono-1,5-lactone + NADPH + H(+). It functions in the pathway carbohydrate degradation; pentose phosphate pathway; D-ribulose 5-phosphate from D-glucose 6-phosphate (oxidative stage): step 1/3. Its function is as follows. Cytosolic glucose-6-phosphate dehydrogenase that catalyzes the first and rate-limiting step of the oxidative branch within the pentose phosphate pathway/shunt, an alternative route to glycolysis for the dissimilation of carbohydrates and a major source of reducing power and metabolic intermediates for fatty acid and nucleic acid biosynthetic processes. This is Glucose-6-phosphate 1-dehydrogenase from Drosophila melanogaster (Fruit fly).